Here is a 28-residue protein sequence, read N- to C-terminus: Ribosome-inactivating protein pleuturegin (28 aa).

It belongs to the ribosome-inactivating protein family.

It carries out the reaction Endohydrolysis of the N-glycosidic bond at one specific adenosine on the 28S rRNA.. Its function is as follows. Inhibits protein synthesis in animal cells. Does not possess ribonuclease activity. The protein is Ribosome-inactivating protein pleuturegin of Pleurotus tuber-regium (King tuber oyster mushroom).